Here is a 475-residue protein sequence, read N- to C-terminus: 3-hydroxyadipyl-CoA dehydrogenase (475 aa).

Belongs to the 3-hydroxyacyl-CoA dehydrogenase family. In terms of assembly, homotrimer.

It carries out the reaction (3S)-3-hydroxyadipyl-CoA + NAD(+) = 3-oxoadipyl-CoA + NADH + H(+). Its pathway is aromatic compound metabolism; phenylacetate degradation. Catalyzes the oxidation of 3-hydroxyadipyl-CoA to yield 3-oxoadipyl-CoA. The protein is 3-hydroxyadipyl-CoA dehydrogenase (paaH) of Escherichia coli (strain K12).